We begin with the raw amino-acid sequence, 509 residues long: MFS antiporter QDR1 (509 aa).

The Cytoplasmic segment spans residues 1-41 (MPGNREEFDIEKVLKSKKLEAIETSTEKKAPYTVFESTDKL). A helical membrane pass occupies residues 42 to 62 (LLIIVLSLVGFWSAISSPIYF). Residues 63–75 (PALPTLTKYFNTT) are Extracellular-facing. Residues 76-96 (PSVMNISVVAYLIFQGIAPTI) traverse the membrane as a helical segment. The Cytoplasmic portion of the chain corresponds to 97–106 (SSNLADTFGR). Residues 107–129 (RPVILGSIIVFCAVCIAISQTNV) form a helical membrane-spanning segment. Residues 130–132 (YWL) lie on the Extracellular side of the membrane. The helical transmembrane segment at 133–155 (LALLRCFQAAGIAPVFAISSGVA) threads the bilayer. Residues 156–169 (GDICTPANRGGMVG) are Cytoplasmic-facing. The helical transmembrane segment at 170 to 190 (AVSGLQLAGNGIGGLVGAALI) threads the bilayer. Over 191 to 197 (SGFHTWR) the chain is Extracellular. Residues 198–218 (AIFIFLAIGGGVTFIFAFLVL) form a helical membrane-spanning segment. Over 219-278 (AETSRRIVGNGSIRPKNVLNKAVLIYLPHFKNKITNDYSTLQPKGPFDILGPFKIFFQKE) the chain is Cytoplasmic. A helical membrane pass occupies residues 279–299 (VFCTLLPSGMHFAAWTVSLTS). The Extracellular segment spans residues 300 to 312 (LSTELESAKYNYS). The chain crosses the membrane as a helical span at residues 313-333 (VMKVGLVYLPQGIACFIGSLI). At 334-370 (AGRCLNWYYRYRKNLYDKQMNDVPLNDRPPFNLVASR) the chain is on the cytoplasmic side. Residues 371 to 391 (LTLTIVPLAMMVIGLSAFGWC) form a helical membrane-spanning segment. The Extracellular portion of the chain corresponds to 392-397 (LEYKKP). Residues 398–418 (IISIIISTILISFSASVMMSI) traverse the membrane as a helical segment. Residues 419 to 432 (CTTMLVDLYPKQSG) lie on the Cytoplasmic side of the membrane. The helical transmembrane segment at 433-453 (ASASCVNLMRCWLAALFTGVL) threads the bilayer. Residues 454-455 (DK) lie on the Extracellular side of the membrane. The chain crosses the membrane as a helical span at residues 456–476 (IISALGLGGTYTLLTGICLLT). Residues 477-509 (DLGLVYVLYTANQRFVNYVSPNQTAVNSDAEDY) are Cytoplasmic-facing.

It belongs to the major facilitator superfamily. CAR1 family.

Its subcellular location is the cell membrane. In terms of biological role, MFS antiporter that does not display functional linkage as drug transporter and performs functions that significantly affect biofilm development and virulence. No substrate for transport has been identified yet, but plays an important role in the growth in the host. The polypeptide is MFS antiporter QDR1 (QDR) (Candida albicans (strain SC5314 / ATCC MYA-2876) (Yeast)).